The chain runs to 637 residues: Biosynthetic arginine decarboxylase (637 aa).

Lys101 bears the N6-(pyridoxal phosphate)lysine mark. A substrate-binding site is contributed by 286–296 (FDVGGGLAVDY).

It belongs to the Orn/Lys/Arg decarboxylase class-II family. SpeA subfamily. Requires Mg(2+) as cofactor. Pyridoxal 5'-phosphate serves as cofactor.

The enzyme catalyses L-arginine + H(+) = agmatine + CO2. Its pathway is amine and polyamine biosynthesis; agmatine biosynthesis; agmatine from L-arginine: step 1/1. In terms of biological role, catalyzes the biosynthesis of agmatine from arginine. The sequence is that of Biosynthetic arginine decarboxylase from Shewanella sp. (strain MR-7).